The chain runs to 442 residues: MENAKMTSLIAQYPLVEDLIALKETTWFNPGTTSLAEGLPYVGLTAQDVQDAHARLARFAPYLAKAFPETAATGGIIESELAIIPAMQQRLEKEYGQKISGELLLKKDSHLPISGSIKARGGIYEVLAHAEKLALEAGLLTTEDDYSVMLSPEFRQFFSQYSIAVGSTGNLGLSIGIMSACIGFKVTVHMSADARAWKKAKLRSHGVTVVEYEEDYGVAVEQGRKAAQSDPNCFFIDDENSRTLFLGYAVAGQRLKAQFAQQGRVVDADHPLFVYLPCGVGGGPGGVAFGLKLAFGDNVHCFFAEPTHSPCMLLGVYTGLHDAISVQEIGVDNLTAADGLAVGRASGFVGRAMERLLDGLYTLDDRTMYDMLGWLAQEEGIRLEPSALAGMAGPQRVCRSTDYQQMHAFSAEQLNHATHLVWATGGGMVPEEEMAQYLAKGR.

K118 carries the post-translational modification N6-(pyridoxal phosphate)lysine.

This sequence belongs to the serine/threonine dehydratase family. DsdA subfamily. As to quaternary structure, monomer. Requires pyridoxal 5'-phosphate as cofactor.

The enzyme catalyses D-serine = pyruvate + NH4(+). The polypeptide is D-serine dehydratase (Citrobacter koseri (strain ATCC BAA-895 / CDC 4225-83 / SGSC4696)).